We begin with the raw amino-acid sequence, 84 residues long: MTDKIRTLQGRVVSDKMEKSIVVAIERKVKHPLYGKFIKRTTKLHVHDENNECGIGDVVEIRETRPLSKTKSWTLVRVVEKAIL.

This sequence belongs to the universal ribosomal protein uS17 family. As to quaternary structure, part of the 30S ribosomal subunit.

In terms of biological role, one of the primary rRNA binding proteins, it binds specifically to the 5'-end of 16S ribosomal RNA. The sequence is that of Small ribosomal subunit protein uS17 from Photorhabdus laumondii subsp. laumondii (strain DSM 15139 / CIP 105565 / TT01) (Photorhabdus luminescens subsp. laumondii).